Here is a 362-residue protein sequence, read N- to C-terminus: MNIFGTRLKFTSFGESHGVAVGCIIDGMPAGVKFDEEFLQNELDKRKGGSKFATPRKESDKAQVLSGVFEGYTTGHPIAIVVFNENAHSKDYDNLKDLFRPAHADFTYFYKYAIRDHRGGGRSSARESVARVAGGAVAAMLLREFGICVQSGVFGVGTFVSNLKEEEFDFEFAKKSEIFCLDPKLESDFKNEILNARNSKDSVGAAVFTKVSGMLVGLGEVLYDKLDSKLAHALMGINAVKAVEIGEGINASKMRGSCNNDALKDGKFLSNHSGGILGGISNGENLILKTYFKPTPSIFAKQESIDKFGNNLEFELKGRHDPCVGVRGSVVASAMVRLVLADCLLLNTSANLNNLKNAYGLK.

Residue arginine 46 participates in NADP(+) binding. FMN is bound by residues 122 to 124 (RSS), 238 to 239 (NA), glycine 278, 293 to 297 (KPTPS), and arginine 319.

Belongs to the chorismate synthase family. As to quaternary structure, homotetramer. Requires FMNH2 as cofactor.

It carries out the reaction 5-O-(1-carboxyvinyl)-3-phosphoshikimate = chorismate + phosphate. The protein operates within metabolic intermediate biosynthesis; chorismate biosynthesis; chorismate from D-erythrose 4-phosphate and phosphoenolpyruvate: step 7/7. Catalyzes the anti-1,4-elimination of the C-3 phosphate and the C-6 proR hydrogen from 5-enolpyruvylshikimate-3-phosphate (EPSP) to yield chorismate, which is the branch point compound that serves as the starting substrate for the three terminal pathways of aromatic amino acid biosynthesis. This reaction introduces a second double bond into the aromatic ring system. This Campylobacter jejuni subsp. doylei (strain ATCC BAA-1458 / RM4099 / 269.97) protein is Chorismate synthase.